Here is an 89-residue protein sequence, read N- to C-terminus: Small ribosomal subunit protein uS15 (89 aa).

Belongs to the universal ribosomal protein uS15 family. In terms of assembly, part of the 30S ribosomal subunit. Forms a bridge to the 50S subunit in the 70S ribosome, contacting the 23S rRNA.

Functionally, one of the primary rRNA binding proteins, it binds directly to 16S rRNA where it helps nucleate assembly of the platform of the 30S subunit by binding and bridging several RNA helices of the 16S rRNA. Forms an intersubunit bridge (bridge B4) with the 23S rRNA of the 50S subunit in the ribosome. This is Small ribosomal subunit protein uS15 from Rippkaea orientalis (strain PCC 8801 / RF-1) (Cyanothece sp. (strain PCC 8801)).